The following is a 175-amino-acid chain: Small ribosomal subunit protein uS5 (175 aa).

Positions 19–82 (WVDRLVSVNR…DDAKKNVIRV (64 aa)) constitute an S5 DRBM domain.

The protein belongs to the universal ribosomal protein uS5 family. Part of the 30S ribosomal subunit. Contacts proteins S4 and S8.

In terms of biological role, with S4 and S12 plays an important role in translational accuracy. Located at the back of the 30S subunit body where it stabilizes the conformation of the head with respect to the body. This is Small ribosomal subunit protein uS5 from Salinibacter ruber (strain DSM 13855 / M31).